The primary structure comprises 309 residues: Testis-expressed protein 264 homolog (309 aa).

The Lumenal portion of the chain corresponds to Met-1–Asp-3. Residues Leu-4–Phe-24 form a helical; Signal-anchor for type III membrane protein membrane-spanning segment. Residues Ala-25 to Glu-309 lie on the Cytoplasmic side of the membrane. Positions Pro-193–Glu-309 are disordered. Residues Ala-208–Ser-225 show a composition bias toward low complexity. A phosphoserine mark is found at Ser-238 and Ser-243. Positions Gly-250–Tyr-262 are enriched in basic and acidic residues. Residues Ser-263–Phe-272 show a composition bias toward low complexity. Positions Phe-272–Leu-275 match the LIR motif motif.

In terms of assembly, interacts (via the LIR motif) with ATG8 family proteins MAP1LC3A, MAP1LC3B, GABARAP and GABARAPL1. Interacts with VCP/p97; bridging VCP/p97 to covalent DNA-protein cross-links (DPCs). Interacts with TOP1 (when sumoylated).

The protein resides in the endoplasmic reticulum membrane. Its subcellular location is the cytoplasmic vesicle. It localises to the autophagosome. The protein localises to the cytoplasm. It is found in the cytosol. The protein resides in the nucleus. Its subcellular location is the chromosome. In terms of biological role, major reticulophagy (also called ER-phagy) receptor that acts independently of other candidate reticulophagy receptors to remodel subdomains of the endoplasmic reticulum into autophagosomes upon nutrient stress, which then fuse with lysosomes for endoplasmic reticulum turnover. The ATG8-containing isolation membrane (IM) cradles a tubular segment of TEX264-positive ER near a three-way junction, allowing the formation of a synapse of 2 juxtaposed membranes with trans interaction between the TEX264 and ATG8 proteins. Expansion of the IM would extend the capture of ER, possibly through a 'zipper-like' process involving continued trans TEX264-ATG8 interactions, until poorly understood mechanisms lead to the fission of relevant membranes and, ultimately, autophagosomal membrane closure. Also involved in the repair of covalent DNA-protein cross-links (DPCs) during DNA synthesis: acts by bridging VCP/p97 to covalent DNA-protein cross-links (DPCs) and initiating resolution of DPCs by SPRTN. This chain is Testis-expressed protein 264 homolog, found in Mus musculus (Mouse).